A 1044-amino-acid chain; its full sequence is Integrin alpha-V (1044 aa).

An N-terminal signal peptide occupies residues 1 to 30 (MAAPGRLLLRPRPGGLLLLLPGLLLPLADA). The Extracellular portion of the chain corresponds to 31 to 988 (FNLDVESPAE…WGIQPAPMPV (958 aa)). 7 FG-GAP repeats span residues 32–98 (NLDV…RRCQ), 109–170 (DYAK…VEYA), 173–225 (RSKN…ISKY), 237–291 (QLAT…GKNM), 292–357 (SSLH…GDFQ), 358–415 (TTKL…GLNS), and 419–482 (QILE…VYPS). Asn-74 carries an N-linked (GlcNAc...) asparagine glycan. Intrachain disulfides connect Cys-89–Cys-97, Cys-138–Cys-158, and Cys-172–Cys-185. Ca(2+) is bound by residues Asp-260, Asn-262, Asp-264, Ile-266, and Asp-268. Residues Asn-290 and Asn-296 are each glycosylated (N-linked (GlcNAc...) asparagine). Residues Asp-314, Asn-316, Asp-318, Tyr-320, Asp-322, Asp-379, Asp-381, Asp-383, Phe-385, Asp-387, Asp-443, Asp-445, Asn-447, Tyr-449, and Asp-451 each coordinate Ca(2+). Intrachain disulfides connect Cys-491/Cys-502 and Cys-508/Cys-565. Asn-615 carries an N-linked (GlcNAc...) asparagine glycan. Disulfide bonds link Cys-626–Cys-632 and Cys-698–Cys-711. 4 N-linked (GlcNAc...) asparagine glycosylation sites follow: Asn-704, Asn-835, Asn-851, and Asn-869. 2 cysteine pairs are disulfide-bonded: Cys-852–Cys-910 and Cys-900–Cys-905. Asn-941, Asn-969, and Asn-976 each carry an N-linked (GlcNAc...) asparagine glycan. A helical membrane pass occupies residues 989 to 1012 (PVWVIILAVLAGLLLLAVLVFVMY). Residues 1013-1044 (RMGFFKRVRPPQEEQEREQLQPHENGEGNSET) lie on the Cytoplasmic side of the membrane. A GFFKR motif motif is present at residues 1015-1019 (GFFKR). Residues 1023–1038 (PQEEQEREQLQPHENG) are compositionally biased toward basic and acidic residues. Residues 1023–1044 (PQEEQEREQLQPHENGEGNSET) form a disordered region.

This sequence belongs to the integrin alpha chain family. Heterodimer of an alpha and a beta subunit. The alpha subunit is composed of a heavy and a light chain linked by a disulfide bond. Alpha-V (ITGAV) associates with either beta-1 (ITGB1), beta-3 (ITGB3), beta-5 (ITGB5), beta-6 (ITGB6) or beta-8 (ITGB8). Interacts with RAB25. Interacts with CIB1. Integrins ITGAV:ITGB3 and ITGAV:ITGB5 interact with FBLN5 (via N-terminus). ITGAV:ITGB3 and ITGAV:ITGB5 interact with CCN3. ITGAV:ITGB3 interacts with ADGRA2. ITGAV:ITGB3 interacts with FGF2; it is likely that FGF2 can simultaneously bind ITGAV:ITGB3 and FGF receptors. ITGAV:ITGB3 interacts with SELP (via C-type lectin domain); the interaction mediates cell-cell interaction and adhesion. ITGAV:ITGB3 is found in a ternary complex with CX3CR1 and CX3CL1. ITGAV:ITGB3 is found in a ternary complex with NRG1 and ERBB3. ITGAV:ITGB3 is found in a ternary complex with FGF1 and FGFR1. ITGAV:ITGB3 is found in a ternary complex with IGF1 and IGF1R. ITGAV:ITGB3 interacts with IGF2. ITGAV:ITGB3 and ITGAV:ITGB6 interact with FBN1. ITGAV:ITGB3 interacts with CD9, CD81 and CD151 (via second extracellular domain). ITGAV:ITGB6 interacts with TGFB1. ITGAV:ITGB3 interacts with PTN. Forms a complex with PTPRZ1 and PTN that stimulates endothelial cell migration through ITGB3 'Tyr-773' phosphorylation. Interacts with TM4SF19.

The protein localises to the cell membrane. It is found in the cell junction. It localises to the focal adhesion. Its function is as follows. The alpha-V (ITGAV) integrins are receptors for vitronectin, cytotactin, fibronectin, fibrinogen, laminin, matrix metalloproteinase-2, osteopontin, osteomodulin, prothrombin, thrombospondin, TGFB1 and vWF. They recognize the sequence R-G-D in a wide array of ligands. Alpha-V integrins may play a role in embryo implantation, angiogenesis and wound healing. ITGAV:ITGB3 binds to fractalkine (CX3CL1) and may act as its coreceptor in CX3CR1-dependent fractalkine signaling. ITGAV:ITGB3 binds to NRG1 (via EGF domain) and this binding is essential for NRG1-ERBB signaling. ITGAV:ITGB3 binds to FGF1 and this binding is essential for FGF1 signaling. ITGAV:ITGB3 binds to FGF2 and this binding is essential for FGF2 signaling. ITGAV:ITGB3 binds to IGF1 and this binding is essential for IGF1 signaling. ITGAV:ITGB3 binds to IGF2 and this binding is essential for IGF2 signaling. ITGAV:ITGB3 binds to IL1B and this binding is essential for IL1B signaling. ITGAV:ITGB3 binds to PLA2G2A via a site (site 2) which is distinct from the classical ligand-binding site (site 1) and this induces integrin conformational changes and enhanced ligand binding to site 1. ITGAV:ITGB3 and ITGAV:ITGB6 act as a receptor for fibrillin-1 (FBN1) and mediate R-G-D-dependent cell adhesion to FBN1. Integrin alpha-V/beta-6 or alpha-V/beta-8 (ITGAV:ITGB6 or ITGAV:ITGB8) mediates R-G-D-dependent release of transforming growth factor beta-1 (TGF-beta-1) from regulatory Latency-associated peptide (LAP), thereby playing a key role in TGF-beta-1 activation. ITGAV:ITGB3 acts as a receptor for CD40LG. ITGAV:ITGB3 binds to the Lilrb4a/Gp49b receptor and enhances the Lilrb4a-mediated inhibition of mast cell activation. ITGAV:ITGB3 also suppresses marginal zone B cell antibody production through its interaction with Lilrb4a. ITGAV:ITGB3 acts as a receptor for IBSP and promotes cell adhesion and migration to IBSP. This Mus musculus (Mouse) protein is Integrin alpha-V (Itgav).